The following is a 181-amino-acid chain: Beta-lactoglobulin-2 (181 aa).

The signal sequence occupies residues 1–18 (MKCLLLALGLSLMCGNQA). 2 disulfides stabilise this stretch: C84–C179 and C124–C138.

This sequence belongs to the calycin superfamily. Lipocalin family. In terms of assembly, monomer.

It localises to the secreted. Its function is as follows. Lactoglobulin is the primary component of whey, it binds retinol and is probably involved in the transport of that molecule. In Equus caballus (Horse), this protein is Beta-lactoglobulin-2 (LGB2).